Reading from the N-terminus, the 46-residue chain is Photosystem II reaction center protein K (46 aa).

Residues 1–9 (MLILLNTFA) constitute a propeptide that is removed on maturation. Residues 25–45 (LPLIPLFFFLLVFVWQAAVGF) form a helical membrane-spanning segment.

The protein belongs to the PsbK family. As to quaternary structure, PSII is composed of 1 copy each of membrane proteins PsbA, PsbB, PsbC, PsbD, PsbE, PsbF, PsbH, PsbI, PsbJ, PsbK, PsbL, PsbM, PsbT, PsbX, PsbY, Psb30/Ycf12, peripheral proteins PsbO, CyanoQ (PsbQ), PsbU, PsbV and a large number of cofactors. It forms dimeric complexes.

The protein localises to the cellular thylakoid membrane. One of the components of the core complex of photosystem II (PSII). PSII is a light-driven water:plastoquinone oxidoreductase that uses light energy to abstract electrons from H(2)O, generating O(2) and a proton gradient subsequently used for ATP formation. It consists of a core antenna complex that captures photons, and an electron transfer chain that converts photonic excitation into a charge separation. The polypeptide is Photosystem II reaction center protein K (Prochlorococcus marinus (strain MIT 9215)).